The following is a 315-amino-acid chain: Ribosomal RNA small subunit methyltransferase H (315 aa).

S-adenosyl-L-methionine contacts are provided by residues 35 to 37 (GGH), Asp55, Phe79, Asp101, and Gln108.

The protein belongs to the methyltransferase superfamily. RsmH family.

It is found in the cytoplasm. The enzyme catalyses cytidine(1402) in 16S rRNA + S-adenosyl-L-methionine = N(4)-methylcytidine(1402) in 16S rRNA + S-adenosyl-L-homocysteine + H(+). In terms of biological role, specifically methylates the N4 position of cytidine in position 1402 (C1402) of 16S rRNA. The protein is Ribosomal RNA small subunit methyltransferase H of Photobacterium profundum (strain SS9).